A 162-amino-acid chain; its full sequence is Succinate dehydrogenase assembly factor 2, mitochondrial (162 aa).

Residues 1-35 constitute a mitochondrion transit peptide; that stretch reads MHNMFPALTKTLSLQGYKIINSQTGSAAWSCGRRW.

The protein belongs to the SDHAF2 family. Interacts with the flavoprotein subunit within the SDH catalytic dimer.

The protein resides in the mitochondrion matrix. Functionally, plays an essential role in the assembly of succinate dehydrogenase (SDH), an enzyme complex (also referred to as respiratory complex II) that is a component of both the tricarboxylic acid (TCA) cycle and the mitochondrial electron transport chain, and which couples the oxidation of succinate to fumarate with the reduction of ubiquinone (coenzyme Q) to ubiquinol. Required for flavinylation (covalent attachment of FAD) of the flavoprotein subunit of the SDH catalytic dimer. This chain is Succinate dehydrogenase assembly factor 2, mitochondrial, found in Saccharomyces cerevisiae (strain RM11-1a) (Baker's yeast).